We begin with the raw amino-acid sequence, 290 residues long: 4-hydroxy-tetrahydrodipicolinate synthase (290 aa).

Thr44 lines the pyruvate pocket. Catalysis depends on Tyr132, which acts as the Proton donor/acceptor. The active-site Schiff-base intermediate with substrate is the Lys160. Ile202 is a binding site for pyruvate.

The protein belongs to the DapA family. In terms of assembly, homotetramer; dimer of dimers.

Its subcellular location is the cytoplasm. It carries out the reaction L-aspartate 4-semialdehyde + pyruvate = (2S,4S)-4-hydroxy-2,3,4,5-tetrahydrodipicolinate + H2O + H(+). It participates in amino-acid biosynthesis; L-lysine biosynthesis via DAP pathway; (S)-tetrahydrodipicolinate from L-aspartate: step 3/4. In terms of biological role, catalyzes the condensation of (S)-aspartate-beta-semialdehyde [(S)-ASA] and pyruvate to 4-hydroxy-tetrahydrodipicolinate (HTPA). The protein is 4-hydroxy-tetrahydrodipicolinate synthase of Citrifermentans bemidjiense (strain ATCC BAA-1014 / DSM 16622 / JCM 12645 / Bem) (Geobacter bemidjiensis).